A 1088-amino-acid polypeptide reads, in one-letter code: RNA-directed RNA polymerase (1088 aa).

Residues 501–687 (LSYGDVTRFL…AKRYIAGGKI (187 aa)) form the RdRp catalytic domain.

It belongs to the reoviridae RNA-directed RNA polymerase family. As to quaternary structure, interacts with VP3 (Potential). Interacts with VP2; this interaction activates VP1. Interacts with NSP5; this interaction is probably necessary for the formation of functional virus factories. Interacts with NSP2; this interaction is weak. Mg(2+) serves as cofactor.

The protein localises to the virion. The enzyme catalyses RNA(n) + a ribonucleoside 5'-triphosphate = RNA(n+1) + diphosphate. In terms of biological role, RNA-directed RNA polymerase that is involved in both transcription and genome replication. Together with VP3 capping enzyme, forms an enzyme complex positioned near the channels situated at each of the five-fold vertices of the core. Following infection, the outermost layer of the virus is lost, leaving a double-layered particle (DLP) made up of the core and VP6 shell. VP1 then catalyzes the transcription of fully conservative plus-strand genomic RNAs that are extruded through the DLP's channels into the cytoplasm where they function as mRNAs for translation of viral proteins. One copy of each of the viral (+)RNAs is also recruited during core assembly, together with newly synthesized polymerase complexes and VP2. The polymerase of these novo-formed particles catalyzes the synthesis of complementary minus-strands leading to dsRNA formation. To do so, the polymerase specifically recognizes and binds 4 bases 5'-UGUG-3' in the conserved 3'-sequence of plus-strand RNA templates. VP2 presumably activates the autoinhibited VP1-RNA complex to coordinate packaging and genome replication. Once dsRNA synthesis is complete, the polymerase switches to the transcriptional mode, thus providing secondary transcription. The polypeptide is RNA-directed RNA polymerase (Rotavirus A (isolate RVA/Human/United States/WI61/1983/G9P1A[8]) (RV-A)).